Consider the following 391-residue polypeptide: Anhydro-N-acetylmuramic acid kinase (391 aa).

Residue 9–16 (GTSVDGID) participates in ATP binding.

This sequence belongs to the anhydro-N-acetylmuramic acid kinase family.

The enzyme catalyses 1,6-anhydro-N-acetyl-beta-muramate + ATP + H2O = N-acetyl-D-muramate 6-phosphate + ADP + H(+). Its pathway is amino-sugar metabolism; 1,6-anhydro-N-acetylmuramate degradation. It functions in the pathway cell wall biogenesis; peptidoglycan recycling. In terms of biological role, catalyzes the specific phosphorylation of 1,6-anhydro-N-acetylmuramic acid (anhMurNAc) with the simultaneous cleavage of the 1,6-anhydro ring, generating MurNAc-6-P. Is required for the utilization of anhMurNAc either imported from the medium or derived from its own cell wall murein, and thus plays a role in cell wall recycling. This Gloeothece citriformis (strain PCC 7424) (Cyanothece sp. (strain PCC 7424)) protein is Anhydro-N-acetylmuramic acid kinase.